Consider the following 160-residue polypeptide: MSLATLDTTEHPNLPTVSTTLFKAKAARKLSFEKIGEHIGRNEVAAAAIFYGQAKPSREDIEKLADLLHIPQQPLEEQLNGFPDRGRSVEMPPKEPLIYRLYEIVQNYGYAYKAVLNEKFGDGIMSAISFSTKVEKETDEDGNNWAVITLRGKWLPFSRF.

Active-site residues include Arg100, Glu103, and Ser126.

This sequence belongs to the cyanase family.

It catalyses the reaction cyanate + hydrogencarbonate + 3 H(+) = NH4(+) + 2 CO2. In terms of biological role, catalyzes the reaction of cyanate with bicarbonate to produce ammonia and carbon dioxide. The chain is Cyanate hydratase from Penicillium rubens (strain ATCC 28089 / DSM 1075 / NRRL 1951 / Wisconsin 54-1255) (Penicillium chrysogenum).